The chain runs to 463 residues: Matrix remodeling-associated protein 8 (463 aa).

A signal peptide spans Met1–Ala19. At Val20 to Gln362 the chain is on the extracellular side. 2 consecutive Ig-like V-type domains span residues Pro29–Thr173 and Pro176–Thr308. Cystine bridges form between Cys54–Cys153 and Cys202–Cys288. Asn135 is a glycosylation site (N-linked (GlcNAc...) asparagine). A Phosphoserine modification is found at Ser244. Residues Arg268–Asp270 carry the RGD motif. A disordered region spans residues Glu309 to Leu341. Residues Ser321–Gly335 are compositionally biased toward low complexity. An N-linked (GlcNAc...) asparagine glycan is attached at Asn324. A helical membrane pass occupies residues Leu363 to Ala383. The Cytoplasmic segment spans residues Thr384–Lys463.

As to quaternary structure, homodimer in cis. Does not appear to form trans-homodimers. Interacts with ITGB3; the interaction inhibits ITGAV:ITGB3 heterodimer formation.

It is found in the cell membrane. The protein resides in the cell junction. It localises to the tight junction. Its subcellular location is the cytoplasm. The protein localises to the cell projection. It is found in the cilium membrane. The protein resides in the nucleus. Its function is as follows. Transmembrane protein which can modulate activity of various signaling pathways, probably via binding to integrin ITGAV:ITGB3. Mediates heterophilic cell-cell interactions in vitro. Inhibits osteoclastogenesis downstream of TNFSF11/RANKL and CSF1, where it may function by attenuating signaling via integrin ITGB3 and MAP kinase p38. Plays a role in cartilage formation where it promotes proliferation and maturation of growth plate chondrocytes. Stimulates formation of primary cilia in chondrocytes. Enhances expression of genes involved in the hedgehog signaling pathway in chondrocytes, including the hedgehog signaling molecule IHH; may also promote signaling via the PTHLH/PTHrP pathway. Plays a role in angiogenesis where it suppresses migration of endothelial cells and also promotes their apoptosis. Inhibits VEGF-induced activation of AKT and p38 MAP kinase in endothelial cells. Also inhibits VTN (vitronectin)-mediated integrin ITGAV:ITGB3 signaling and activation of PTK2/FAK. May play a role in the maturation and maintenance of the blood-brain barrier. The polypeptide is Matrix remodeling-associated protein 8 (MXRA8) (Bos taurus (Bovine)).